A 706-amino-acid polypeptide reads, in one-letter code: Transcription factor 12 (706 aa).

The segment at 25–109 (AMFSPPVNSG…TPFMNSNLIG (85 aa)) is disordered. Composition is skewed to polar residues over residues 30 to 48 (PVNSGKTRPTTLGSSQFSG) and 56 to 76 (GTTSWGTSGQPSPSYDSSRGF). Phosphoserine occurs at positions 47, 67, and 79. A compositionally biased stretch (basic and acidic residues) spans 81–93 (HYSDHLNDSRLGT). S98 carries the post-translational modification Phosphoserine. Residue K110 forms a Glycyl lysine isopeptide (Lys-Gly) (interchain with G-Cter in SUMO2) linkage. A phosphoserine mark is found at S116 and S124. The tract at residues 119–140 (LYSRDSGLSGCQSSLLRQDLGL) is leucine-zipper. Disordered stretches follow at residues 140-222 (LGSP…SMFA) and 249-313 (FGGI…ASHT). A compositionally biased stretch (polar residues) spans 144–163 (AQLSSSGKPGTPYYSFSATS). A Glycyl lysine isopeptide (Lys-Gly) (interchain with G-Cter in SUMO2) cross-link involves residue K181. The Nuclear localization signal signature appears at 181–188 (KKVRKVPP). Residues 256–269 (STSHMSQSSSYGSL) show a composition bias toward low complexity. Over residues 282-306 (VSPTDINTSLPPMSSFHRGSTSSSP) the composition is skewed to polar residues. At T313 the chain carries Phosphothreonine. The residue at position 333 (S333) is a Phosphoserine. 2 disordered regions span residues 349–392 (PDHT…YENS) and 520–604 (HKTP…ERRM). Over residues 352 to 363 (TSSSFPSNPSTP) the composition is skewed to low complexity. Composition is skewed to polar residues over residues 364–376 (VGSPSPLTGTSQW) and 383–392 (APSSPSYENS). S392 is modified (phosphoserine). Basic and acidic residues-rich tracts occupy residues 542–554 (IKTENKEKDENLH) and 560–575 (DDMKSDDESSQKDIKV). Residue K543 forms a Glycyl lysine isopeptide (Lys-Gly) (interchain with G-Cter in SUMO2) linkage. Phosphoserine is present on S564. K574 participates in a covalent cross-link: Glycyl lysine isopeptide (Lys-Gly) (interchain with G-Cter in SUMO2). T581 carries the post-translational modification Phosphothreonine. A phosphoserine mark is found at S582 and S583. The span at 592 to 604 (PEQKIEREKERRM) shows a compositional bias: basic and acidic residues. One can recognise a bHLH domain in the interval 601–654 (ERRMANNARERLRVRDINEAFKELGRMCQLHLKSEKPQTKLLILHQAVAVILSL). Glycyl lysine isopeptide (Lys-Gly) (interchain with G-Cter in SUMO2) cross-links involve residues K633 and K677. A class A specific domain region spans residues 656-679 (QQVRERNLNPKAACLKRREEEKVS). The interval 674-706 (EEEKVSAASAEPPNTLPGAHPGLSESTNPMGHL) is disordered. Over residues 697–706 (SESTNPMGHL) the composition is skewed to polar residues.

In terms of assembly, efficient DNA binding requires dimerization with another bHLH protein. Forms homo- or heterooligomers with myogenin, E12 and ITF2 proteins and RUNX1T1. Interacts with PTF1A. Interacts with NEUROD2. Interacts with BHLHA9. Widely expressed.

The protein resides in the nucleus. Functionally, transcriptional regulator. Involved in the initiation of neuronal differentiation. Activates transcription by binding to the E box (5'-CANNTG-3'). May be involved in the functional network that regulates the development of the GnRH axis. The polypeptide is Transcription factor 12 (Tcf12) (Mus musculus (Mouse)).